A 1222-amino-acid chain; its full sequence is ATP-dependent helicase/nuclease subunit A (1222 aa).

The region spanning 39–495 (QKRTAQQIEA…ILLKENFRSQ (457 aa)) is the UvrD-like helicase ATP-binding domain. Residue 60–67 (ASAGSGKT) coordinates ATP. Residues 524-810 (QLIAGSHAQT…NLMTIHKSKG (287 aa)) form the UvrD-like helicase C-terminal domain.

Belongs to the helicase family. AddA subfamily. In terms of assembly, heterodimer of AddA and AddB/RexB. The cofactor is Mg(2+).

It carries out the reaction Couples ATP hydrolysis with the unwinding of duplex DNA by translocating in the 3'-5' direction.. The catalysed reaction is ATP + H2O = ADP + phosphate + H(+). Its function is as follows. The heterodimer acts as both an ATP-dependent DNA helicase and an ATP-dependent, dual-direction single-stranded exonuclease. Recognizes the chi site generating a DNA molecule suitable for the initiation of homologous recombination. The AddA nuclease domain is required for chi fragment generation; this subunit has the helicase and 3' -&gt; 5' nuclease activities. The chain is ATP-dependent helicase/nuclease subunit A from Streptococcus pyogenes serotype M6 (strain ATCC BAA-946 / MGAS10394).